Consider the following 376-residue polypeptide: Putative phosphoserine aminotransferase (376 aa).

An L-glutamate-binding site is contributed by arginine 50. Residues 84-85 (AT), phenylalanine 108, threonine 154, aspartate 176, and glutamine 199 each bind pyridoxal 5'-phosphate. An N6-(pyridoxal phosphate)lysine modification is found at lysine 200. Pyridoxal 5'-phosphate is bound at residue 251-252 (NT).

It belongs to the class-V pyridoxal-phosphate-dependent aminotransferase family. SerC subfamily. Homodimer. The cofactor is pyridoxal 5'-phosphate.

The protein localises to the cytoplasm. The catalysed reaction is O-phospho-L-serine + 2-oxoglutarate = 3-phosphooxypyruvate + L-glutamate. It catalyses the reaction 4-(phosphooxy)-L-threonine + 2-oxoglutarate = (R)-3-hydroxy-2-oxo-4-phosphooxybutanoate + L-glutamate. The protein operates within amino-acid biosynthesis; L-serine biosynthesis; L-serine from 3-phospho-D-glycerate: step 2/3. It functions in the pathway cofactor biosynthesis; pyridoxine 5'-phosphate biosynthesis; pyridoxine 5'-phosphate from D-erythrose 4-phosphate: step 3/5. Its function is as follows. Catalyzes the reversible conversion of 3-phosphohydroxypyruvate to phosphoserine and of 3-hydroxy-2-oxo-4-phosphonooxybutanoate to phosphohydroxythreonine. The protein is Putative phosphoserine aminotransferase of Mycobacterium bovis (strain ATCC BAA-935 / AF2122/97).